A 428-amino-acid chain; its full sequence is Gamma-glutamyl phosphate reductase (428 aa).

It belongs to the gamma-glutamyl phosphate reductase family.

The protein resides in the cytoplasm. It catalyses the reaction L-glutamate 5-semialdehyde + phosphate + NADP(+) = L-glutamyl 5-phosphate + NADPH + H(+). It functions in the pathway amino-acid biosynthesis; L-proline biosynthesis; L-glutamate 5-semialdehyde from L-glutamate: step 2/2. In terms of biological role, catalyzes the NADPH-dependent reduction of L-glutamate 5-phosphate into L-glutamate 5-semialdehyde and phosphate. The product spontaneously undergoes cyclization to form 1-pyrroline-5-carboxylate. This chain is Gamma-glutamyl phosphate reductase, found in Streptomyces coelicolor (strain ATCC BAA-471 / A3(2) / M145).